We begin with the raw amino-acid sequence, 231 residues long: Urease accessory protein UreE (231 aa).

Residues 185 to 231 (VASPLDEPHGSGLHIHGIHSHGEGHSHGDHDHDHSHSHGDHDHDHKH) form a disordered region. A compositionally biased stretch (basic and acidic residues) spans 204 to 231 (SHGEGHSHGDHDHDHSHSHGDHDHDHKH).

Belongs to the UreE family.

Its subcellular location is the cytoplasm. Its function is as follows. Involved in urease metallocenter assembly. Binds nickel. Probably functions as a nickel donor during metallocenter assembly. The chain is Urease accessory protein UreE from Yersinia pseudotuberculosis serotype O:1b (strain IP 31758).